The chain runs to 245 residues: 1-(5-phosphoribosyl)-5-[(5-phosphoribosylamino)methylideneamino] imidazole-4-carboxamide isomerase (245 aa).

Asp7 functions as the Proton acceptor in the catalytic mechanism. The active-site Proton donor is the Asp129.

This sequence belongs to the HisA/HisF family.

The protein resides in the cytoplasm. It carries out the reaction 1-(5-phospho-beta-D-ribosyl)-5-[(5-phospho-beta-D-ribosylamino)methylideneamino]imidazole-4-carboxamide = 5-[(5-phospho-1-deoxy-D-ribulos-1-ylimino)methylamino]-1-(5-phospho-beta-D-ribosyl)imidazole-4-carboxamide. The protein operates within amino-acid biosynthesis; L-histidine biosynthesis; L-histidine from 5-phospho-alpha-D-ribose 1-diphosphate: step 4/9. This Salmonella agona (strain SL483) protein is 1-(5-phosphoribosyl)-5-[(5-phosphoribosylamino)methylideneamino] imidazole-4-carboxamide isomerase.